Reading from the N-terminus, the 420-residue chain is Gamma-glutamyl phosphate reductase (420 aa).

It belongs to the gamma-glutamyl phosphate reductase family.

It is found in the cytoplasm. The catalysed reaction is L-glutamate 5-semialdehyde + phosphate + NADP(+) = L-glutamyl 5-phosphate + NADPH + H(+). It functions in the pathway amino-acid biosynthesis; L-proline biosynthesis; L-glutamate 5-semialdehyde from L-glutamate: step 2/2. Catalyzes the NADPH-dependent reduction of L-glutamate 5-phosphate into L-glutamate 5-semialdehyde and phosphate. The product spontaneously undergoes cyclization to form 1-pyrroline-5-carboxylate. This chain is Gamma-glutamyl phosphate reductase, found in Oenococcus oeni (strain ATCC BAA-331 / PSU-1).